The chain runs to 352 residues: tRNA (guanine-N(1)-)-methyltransferase (352 aa).

Residues Gly-109 and 129 to 134 contribute to the S-adenosyl-L-methionine site; that span reads IGDYVL.

It belongs to the RNA methyltransferase TrmD family. In terms of assembly, homodimer.

Its subcellular location is the cytoplasm. The catalysed reaction is guanosine(37) in tRNA + S-adenosyl-L-methionine = N(1)-methylguanosine(37) in tRNA + S-adenosyl-L-homocysteine + H(+). Specifically methylates guanosine-37 in various tRNAs. The chain is tRNA (guanine-N(1)-)-methyltransferase from Chlamydia trachomatis serovar L2 (strain ATCC VR-902B / DSM 19102 / 434/Bu).